The primary structure comprises 93 residues: UPF0223 protein YfdD (93 aa).

Belongs to the UPF0223 family.

The polypeptide is UPF0223 protein YfdD (yfdD) (Lactococcus lactis subsp. lactis (strain IL1403) (Streptococcus lactis)).